The following is a 79-amino-acid chain: Cytochrome c oxidase subunit 7A1, mitochondrial (79 aa).

The N-terminal 21 residues, Met1 to Arg21, are a transit peptide targeting the mitochondrion. The Mitochondrial matrix segment spans residues Phe22 to Gly46. Residues Ile47–Ser75 traverse the membrane as a helical segment. Residues Phe76 to Asn79 lie on the Mitochondrial intermembrane side of the membrane.

This sequence belongs to the cytochrome c oxidase VIIa family. In terms of assembly, component of the complex IV (CIV, cytochrome c oxidase), a multisubunit enzyme composed of 14 subunits. The complex is composed of a catalytic core of 3 subunits MT-CO1, MT-CO2 and MT-CO3, encoded in the mitochondrial DNA, and 11 supernumerary subunits COX4I1 (or COX4I2), COX5A, COX5B, COX6A2 (or COX6A1), COX6B1 (or COX6B2), COX6C, COX7A1 (or COX7A2), COX7B, COX7C, COX8B and NDUFA4, which are encoded in the nuclear genome. The complex exists as a monomer or a dimer and forms supercomplexes (SCs) in the inner mitochondrial membrane with NADH-ubiquinone oxidoreductase (complex I, CI) and ubiquinol-cytochrome c oxidoreductase (cytochrome b-c1 complex, complex III, CIII), resulting in different assemblies (supercomplex SCI(1)III(2)IV(1) and megacomplex MCI(2)III(2)IV(2)).

Its subcellular location is the mitochondrion inner membrane. It participates in energy metabolism; oxidative phosphorylation. In terms of biological role, component of the mitochondrial respiratory complex IV (CIV, also named cytochrome c oxidase complex), the last enzyme in the mitochondrial electron transport chain which drives oxidative phosphorylation. The CIV complex is the component of the respiratory chain that catalyzes the reduction of oxygen to water. Acts as an assembly factor that specifically drives the homodimerization of CIV complexes, mediating the formation of mitochondrial respiratory supercomplexes (respirasomes) containing two CIV: supercomplxes with two molecules of CIV show improved activity. Despite being highly expressed in brown adipose tissue, not required for thermogenesis. The sequence is that of Cytochrome c oxidase subunit 7A1, mitochondrial (COX7A1) from Homo sapiens (Human).